We begin with the raw amino-acid sequence, 421 residues long: Testin (421 aa).

The PET domain maps to 92–199 (MILTNPVPAK…GDVKLPSEMD (108 aa)). Residues 135–165 (QPVAGSEGAQYRKKQLAKQLPEHDQDPSKCH) form a disordered region. The segment covering 154–165 (LPEHDQDPSKCH) has biased composition (basic and acidic residues). LIM zinc-binding domains lie at 234–297 (YSCY…CDSE), 299–359 (PRCA…NHAV), and 362–421 (QGCH…KMMS).

Belongs to the prickle / espinas / testin family. As to quaternary structure, interacts via LIM domain 1 with ZYX. Interacts (via LIM domain 3) with ENAH and VASP. Interacts with ALKBH4, talin, actin, alpha-actinin, GRIP1 and PXN. Interacts (via LIM domain 2) with ACTL7A (via N-terminus). Heterodimer with ACTL7A; the heterodimer interacts with ENAH to form a heterotrimer.

It localises to the cytoplasm. The protein localises to the cell junction. Its subcellular location is the focal adhesion. Functionally, scaffold protein that may play a role in cell adhesion, cell spreading and in the reorganization of the actin cytoskeleton. Plays a role in the regulation of cell proliferation. May act as a tumor suppressor. This Dasypus novemcinctus (Nine-banded armadillo) protein is Testin (TES).